A 571-amino-acid chain; its full sequence is Sulfite reductase [NADPH] hemoprotein beta-component (571 aa).

Residues Cys435, Cys441, Cys480, and Cys484 each contribute to the [4Fe-4S] cluster site. A siroheme-binding site is contributed by Cys484.

It belongs to the nitrite and sulfite reductase 4Fe-4S domain family. As to quaternary structure, alpha(8)-beta(8). The alpha component is a flavoprotein, the beta component is a hemoprotein. Requires siroheme as cofactor. [4Fe-4S] cluster serves as cofactor.

The enzyme catalyses hydrogen sulfide + 3 NADP(+) + 3 H2O = sulfite + 3 NADPH + 4 H(+). Its pathway is sulfur metabolism; hydrogen sulfide biosynthesis; hydrogen sulfide from sulfite (NADPH route): step 1/1. In terms of biological role, component of the sulfite reductase complex that catalyzes the 6-electron reduction of sulfite to sulfide. This is one of several activities required for the biosynthesis of L-cysteine from sulfate. This Musicola paradisiaca (strain Ech703) (Dickeya paradisiaca) protein is Sulfite reductase [NADPH] hemoprotein beta-component.